Reading from the N-terminus, the 262-residue chain is Large ribosomal subunit protein bL9m (262 aa).

The N-terminal 49 residues, Met-1 to Ser-49, are a transit peptide targeting the mitochondrion.

This sequence belongs to the bacterial ribosomal protein bL9 family. As to quaternary structure, component of the mitochondrial ribosome large subunit (39S) which comprises a 16S rRNA and about 50 distinct proteins.

The protein localises to the mitochondrion. The protein is Large ribosomal subunit protein bL9m (Mrpl9) of Rattus norvegicus (Rat).